A 674-amino-acid polypeptide reads, in one-letter code: Transcription activator of gluconeogenesis PMAA_028970 (674 aa).

Residues 1-46 are disordered; it reads MMDTDKDDLPSATDHSEHESGDAVKVEGGASKTASNSKDPSRPRRK. Over residues 14 to 25 the composition is skewed to basic and acidic residues; that stretch reads DHSEHESGDAVK. A DNA-binding region (zn(2)-C6 fungal-type) is located at residues 52-80; the sequence is CFACQRAHLTCGDERPCQRCIKRGLQDAC. Disordered stretches follow at residues 117-181, 250-321, 344-374, and 519-557; these read ISPT…ATPA, TGAG…SGLY, IGSNTFASPSSTTSPHATTIAPSQFDDSPMK, and NLNVNTGGGNNTSSQSDSTSSSIRGGAGGRMRNQEPGPN. Polar residues predominate over residues 120–148; sequence TEYTQNGTNNAQQQQQKSGTIYASSTPSY. Residues 149–163 are compositionally biased toward low complexity; the sequence is NNNNGTFDTNNATNT. Composition is skewed to polar residues over residues 269–278 and 285–294; these read GQRSNSQQFG and TTESPSQQSF. 2 stretches are compositionally biased toward low complexity: residues 348–366 and 529–540; these read TFASPSSTTSPHATTIAPS and NTSSQSDSTSSS.

This sequence belongs to the ERT1/acuK family.

It localises to the nucleus. Functionally, transcription factor which regulates nonfermentable carbon utilization. Activator of gluconeogenetic genes. The polypeptide is Transcription activator of gluconeogenesis PMAA_028970 (Talaromyces marneffei (strain ATCC 18224 / CBS 334.59 / QM 7333) (Penicillium marneffei)).